A 334-amino-acid chain; its full sequence is HTH-type transcriptional repressor PurR (334 aa).

Residues 2–56 enclose the HTH lacI-type domain; the sequence is ATIKDVARLAGVSTTTVSHVINKTRFVAETTQEKVMKAVDELNYAPSAVARSLKC. The H-T-H motif DNA-binding region spans 4 to 23; that stretch reads IKDVARLAGVSTTTVSHVIN. Residues 48–56 mediate DNA binding; the sequence is SAVARSLKC. F73, K189, F220, and D274 together coordinate hypoxanthine.

As to quaternary structure, homodimer.

It participates in purine metabolism; purine nucleotide biosynthesis [regulation]. Functionally, is the main repressor of the genes involved in the de novo synthesis of purine nucleotides, regulating purB, purC, purEK, purF, purHD, purL, purMN and guaBA expression. PurR is allosterically activated to bind its cognate DNA by binding the purine corepressors, hypoxanthine or guanine, thereby effecting transcription repression. This Vibrio campbellii (strain ATCC BAA-1116) protein is HTH-type transcriptional repressor PurR.